Consider the following 154-residue polypeptide: Protein X (154 aa).

The interval 68-117 (PCALRFTSARYMETAMNTSHHLPRQLYKWTLGLFVMSTTGVEKYFKDCVF) is mitochondrial targeting sequence.

The protein belongs to the orthohepadnavirus protein X family. As to quaternary structure, may form homodimer. May interact with host CEBPA, CFLAR, CREB1, DDB1, E4F1, HBXIP, HSPD1/HSP60, NFKBIA, POLR2E and SMAD4. Interacts with host SMC5-SMC6 complex and induces its degradation. Interacts with host TRPC4AP; leading to prevent ubiquitination of TRPC4AP. Interacts with host PLSCR1; this interaction promotes ubiquitination and degradation of HBx and impairs HBx-mediated cell proliferation. Post-translationally, a fraction may be phosphorylated in insect cells and HepG2 cells, a human hepatoblastoma cell line. Phosphorylated in vitro by host protein kinase C or mitogen-activated protein kinase. N-acetylated in insect cells.

It is found in the host cytoplasm. Its subcellular location is the host nucleus. The protein localises to the host mitochondrion. Multifunctional protein that plays a role in silencing host antiviral defenses and promoting viral transcription. Does not seem to be essential for HBV infection. May be directly involved in development of cirrhosis and liver cancer (hepatocellular carcinoma). Most of cytosolic activities involve modulation of cytosolic calcium. The effect on apoptosis is controversial depending on the cell types in which the studies have been conducted. May induce apoptosis by localizing in mitochondria and causing loss of mitochondrial membrane potential. May also modulate apoptosis by binding host CFLAR, a key regulator of the death-inducing signaling complex (DISC). Promotes viral transcription by using the host E3 ubiquitin ligase DDB1 to target the SMC5-SMC6 complex to proteasomal degradation. This host complex would otherwise bind to viral episomal DNA, and prevents its transcription. Moderately stimulates transcription of many different viral and cellular transcription elements. Promoters and enhancers stimulated by HBx contain DNA binding sites for NF-kappa-B, AP-1, AP-2, c-EBP, ATF/CREB, or the calcium-activated factor NF-AT. The protein is Protein X of Hepatitis B virus genotype G (isolate IG29227/2000) (HBV-G).